A 77-amino-acid polypeptide reads, in one-letter code: U8-lycotoxin-Ls1a (77 aa).

A signal peptide spans 1 to 20 (MKLIIFTGLVLFAIVSLIEA). Residues 21–26 (QAENEK) constitute a propeptide that is removed on maturation.

It belongs to the neurotoxin 19 (CSTX) family. 08 (U8-Lctx) subfamily. Post-translationally, contains 4 disulfide bonds. In terms of tissue distribution, expressed by the venom gland.

The protein resides in the secreted. The sequence is that of U8-lycotoxin-Ls1a from Lycosa singoriensis (Wolf spider).